Here is a 439-residue protein sequence, read N- to C-terminus: Lipoyl synthase, mitochondrial (439 aa).

The N-terminal 37 residues, 1–37, are a transit peptide targeting the mitochondrion; it reads MVASARGLRTLHSAHSSISALPASTVPRLQLAVSRCY. C150, C155, C161, C181, C185, C188, and S396 together coordinate [4Fe-4S] cluster. The 222-residue stretch at 164-385 folds into the Radical SAM core domain; that stretch reads GSSKSAATAT…KERALEMGFL (222 aa).

Belongs to the radical SAM superfamily. Lipoyl synthase family. [4Fe-4S] cluster is required as a cofactor.

Its subcellular location is the mitochondrion. It catalyses the reaction [[Fe-S] cluster scaffold protein carrying a second [4Fe-4S](2+) cluster] + N(6)-octanoyl-L-lysyl-[protein] + 2 oxidized [2Fe-2S]-[ferredoxin] + 2 S-adenosyl-L-methionine + 4 H(+) = [[Fe-S] cluster scaffold protein] + N(6)-[(R)-dihydrolipoyl]-L-lysyl-[protein] + 4 Fe(3+) + 2 hydrogen sulfide + 2 5'-deoxyadenosine + 2 L-methionine + 2 reduced [2Fe-2S]-[ferredoxin]. It functions in the pathway protein modification; protein lipoylation via endogenous pathway; protein N(6)-(lipoyl)lysine from octanoyl-[acyl-carrier-protein]: step 2/2. Its function is as follows. Catalyzes the radical-mediated insertion of two sulfur atoms into the C-6 and C-8 positions of the octanoyl moiety bound to the lipoyl domains of lipoate-dependent enzymes, thereby converting the octanoylated domains into lipoylated derivatives. The polypeptide is Lipoyl synthase, mitochondrial (Paracoccidioides lutzii (strain ATCC MYA-826 / Pb01) (Paracoccidioides brasiliensis)).